A 221-amino-acid polypeptide reads, in one-letter code: Orotate phosphoribosyltransferase (221 aa).

Lys26 is a 5-phospho-alpha-D-ribose 1-diphosphate binding site. 34–35 (FF) serves as a coordination point for orotate. Residues 72-73 (YK), Arg99, Lys100, Lys103, His105, and 124-132 (DDVITAGTA) contribute to the 5-phospho-alpha-D-ribose 1-diphosphate site. Orotate is bound by residues Thr128 and Arg156.

It belongs to the purine/pyrimidine phosphoribosyltransferase family. PyrE subfamily. In terms of assembly, homodimer. Mg(2+) serves as cofactor.

The enzyme catalyses orotidine 5'-phosphate + diphosphate = orotate + 5-phospho-alpha-D-ribose 1-diphosphate. It participates in pyrimidine metabolism; UMP biosynthesis via de novo pathway; UMP from orotate: step 1/2. In terms of biological role, catalyzes the transfer of a ribosyl phosphate group from 5-phosphoribose 1-diphosphate to orotate, leading to the formation of orotidine monophosphate (OMP). The protein is Orotate phosphoribosyltransferase of Colwellia psychrerythraea (strain 34H / ATCC BAA-681) (Vibrio psychroerythus).